The sequence spans 367 residues: Molybdopterin synthase catalytic subunit (367 aa).

Residues 101 to 102 (HR), Lys-117, and 124 to 126 (KKE) each bind substrate.

The protein belongs to the MoaE family. MOCS2B subfamily. In terms of assembly, heterotetramer; composed of 2 small (Mocs2A) and 2 large (Mocs2B) subunits.

The protein localises to the cytoplasm. The enzyme catalyses 2 [molybdopterin-synthase sulfur-carrier protein]-C-terminal-Gly-aminoethanethioate + cyclic pyranopterin phosphate + H2O = molybdopterin + 2 [molybdopterin-synthase sulfur-carrier protein]-C-terminal Gly-Gly + 2 H(+). It functions in the pathway cofactor biosynthesis; molybdopterin biosynthesis. Catalytic subunit of the molybdopterin synthase complex, a complex that catalyzes the conversion of precursor Z into molybdopterin. Acts by mediating the incorporation of 2 sulfur atoms from thiocarboxylated Mocs2A into precursor Z to generate a dithiolene group. In Drosophila erecta (Fruit fly), this protein is Molybdopterin synthase catalytic subunit.